We begin with the raw amino-acid sequence, 81 residues long: RNA-binding protein Hfq (81 aa).

A Sm domain is found at 10–69 (DPFLNTLRKEHIPVSIYLVNGIKLQGHIDSFDQYVVLLKNTVTQMVYKHAISTVVPARAV).

This sequence belongs to the Hfq family. Homohexamer.

Functionally, RNA chaperone that binds small regulatory RNA (sRNAs) and mRNAs to facilitate mRNA translational regulation in response to envelope stress, environmental stress and changes in metabolite concentrations. Also binds with high specificity to tRNAs. This Nitrosospira multiformis (strain ATCC 25196 / NCIMB 11849 / C 71) protein is RNA-binding protein Hfq.